The primary structure comprises 417 residues: Phosphoglycerate kinase 2 (417 aa).

Val-23, Asp-24, Phe-25, Asn-26, Asn-38, Arg-39, Ser-62, His-63, Gly-65, Arg-66, Leu-121, Arg-122, His-168, and Arg-169 together coordinate (2R)-3-phosphoglycerate. Gly-212 is a binding site for ADP. A CDP-binding site is contributed by Gly-212. 2 residues coordinate AMP: Ala-213 and Lys-214. Ala-213 provides a ligand contact to ATP. Mg(2+) is bound at residue Ala-213. Asp-217 is a CDP binding site. Residue Asp-217 participates in Mg(2+) binding. Residue Lys-218 participates in AMP binding. Lys-218 contacts ATP. Gly-236 contributes to the ADP binding site. Gly-236 contributes to the CDP binding site. AMP contacts are provided by Gly-237 and Gly-312. ATP-binding residues include Gly-237 and Gly-312. 2 residues coordinate CDP: Gly-337 and Phe-342. Residue Phe-342 coordinates ADP. Position 343 (Glu-343) interacts with AMP. ATP-binding residues include Glu-343, Asp-374, and Thr-375. Asp-374 serves as a coordination point for Mg(2+).

Belongs to the phosphoglycerate kinase family. In terms of assembly, monomer. Mg(2+) is required as a cofactor.

It localises to the cytoplasm. It is found in the mitochondrion. The enzyme catalyses (2R)-3-phosphoglycerate + ATP = (2R)-3-phospho-glyceroyl phosphate + ADP. The protein operates within carbohydrate degradation; glycolysis; pyruvate from D-glyceraldehyde 3-phosphate: step 2/5. Its function is as follows. Catalyzes one of the two ATP producing reactions in the glycolytic pathway via the reversible conversion of 1,3-diphosphoglycerate to 3-phosphoglycerate. Both L- and D- forms of purine and pyrimidine nucleotides can be used as substrates, but the activity is much lower on pyrimidines. Negatively regulates the biosynthesis of acetyl-CoA from pyruvate in the mitochondrion. This is Phosphoglycerate kinase 2 (PGK2) from Rhizopus niveus.